Here is a 47-residue protein sequence, read N- to C-terminus: Large ribosomal subunit protein bL34 (47 aa).

2 stretches are compositionally biased toward basic residues: residues 1 to 22 and 36 to 47; these read MAKG…HGFR and ARRRKGRKSLTA. Residues 1-47 are disordered; it reads MAKGKRTFQPNNRRRSRVHGFRSRMSTRAGRAIVSARRRKGRKSLTA.

This sequence belongs to the bacterial ribosomal protein bL34 family.

In Corynebacterium kroppenstedtii (strain DSM 44385 / JCM 11950 / CIP 105744 / CCUG 35717), this protein is Large ribosomal subunit protein bL34.